We begin with the raw amino-acid sequence, 250 residues long: Kv channel-interacting protein 4 (250 aa).

The tract at residues 2–44 (NVRRVESISAQLEEASSTGGFLYAQNNTKRSIKERLMKLLPCS) is KIS. Ser17 and Ser56 each carry phosphoserine. Residues 61-117 (LEMATVRHRPEALELLEAQSKFTKKELQILYRGFKNECPSGVVNEETFKEIYSQFFP) enclose the EF-hand 1; degenerate domain. 3 consecutive EF-hand domains span residues 120 to 155 (DSTT…LLRG), 156 to 191 (TVQE…IYDM), and 204 to 239 (APRQ…DENI). Ca(2+) is bound by residues Asp133, Asp135, Asn137, Asp144, Asp169, Asn171, Asp173, Tyr175, Glu180, Asp217, Asn219, Asp221, and Glu228. Positions 237-250 (ENIMRSMQLFENVI) are interaction with KCND2.

The protein belongs to the recoverin family. As to quaternary structure, component of heteromultimeric potassium channels. Identified in potassium channel complexes containing KCND1, KCND2, KCND3, KCNIP1, KCNIP2, KCNIP3, KCNIP4, DPP6 and DPP10. Interacts with the C-terminus of PSEN2 and probably PSEN1. Interacts with KCND2 and KCND3. Expressed in brain. Highly expressed by neurons in layers II-IV of cortex and in hippocampus, thalamus and the Purkinje cell layer of the cerebellum.

It localises to the cell membrane. The protein resides in the cytoplasm. The protein localises to the peroxisome. Functionally, regulatory subunit of Kv4/D (Shal)-type voltage-gated rapidly inactivating A-type potassium channels, such as KCND2/Kv4.2 and KCND3/Kv4.3. Modulates channel expression at the cell membrane, gating characteristics, inactivation kinetics and rate of recovery from inactivation in a calcium-dependent and isoform-specific manner. The protein is Kv channel-interacting protein 4 (Kcnip4) of Mus musculus (Mouse).